The sequence spans 389 residues: Succinate--CoA ligase [ADP-forming] subunit beta (389 aa).

An ATP-grasp domain is found at 9 to 244 (KQLLAEYGIP…KTQEDETEVT (236 aa)). ATP is bound by residues Lys-46, 53-55 (GRG), Gly-102, and Glu-107. Mg(2+) contacts are provided by Asn-199 and Asp-213. Residues Asn-264 and 321–323 (GIV) each bind substrate.

Belongs to the succinate/malate CoA ligase beta subunit family. In terms of assembly, heterotetramer of two alpha and two beta subunits. Mg(2+) is required as a cofactor.

The enzyme catalyses succinate + ATP + CoA = succinyl-CoA + ADP + phosphate. The catalysed reaction is GTP + succinate + CoA = succinyl-CoA + GDP + phosphate. The protein operates within carbohydrate metabolism; tricarboxylic acid cycle; succinate from succinyl-CoA (ligase route): step 1/1. Functionally, succinyl-CoA synthetase functions in the citric acid cycle (TCA), coupling the hydrolysis of succinyl-CoA to the synthesis of either ATP or GTP and thus represents the only step of substrate-level phosphorylation in the TCA. The beta subunit provides nucleotide specificity of the enzyme and binds the substrate succinate, while the binding sites for coenzyme A and phosphate are found in the alpha subunit. This Xanthomonas axonopodis pv. citri (strain 306) protein is Succinate--CoA ligase [ADP-forming] subunit beta.